A 364-amino-acid polypeptide reads, in one-letter code: Nucleoporin SEH1 (364 aa).

WD repeat units follow at residues 10–49 (DHKD…EWHC), 55–96 (THSG…SNDK), 111–152 (DSRT…NLSQ), 160–210 (SCKL…RKYA), 217–258 (TVTD…RESA), and 276–315 (SHNS…NWKC).

This sequence belongs to the WD repeat SEC13 family. Component of the Nup107-160 subcomplex of the nuclear pore complex (NPC). The Nup107-160 subcomplex includes NUP160, NUP133, NUP107, NUP98, NUP85, NUP43, NUP37, SEH1 and SEC13. Component of the GATOR2 subcomplex, composed of MIOS, SEC13, SEH1L, WDR24 and WDR59. The GATOR2 complex interacts with CASTOR1 and CASTOR2; the interaction is negatively regulated by arginine. The GATOR2 complex interacts with SESN1, SESN2 and SESN3; the interaction is negatively regulated by amino acids.

The protein resides in the chromosome. The protein localises to the centromere. Its subcellular location is the kinetochore. It is found in the nucleus. It localises to the nuclear pore complex. The protein resides in the lysosome membrane. The GATOR2 complex is negatively regulated by the upstream amino acid sensors CASTOR1 and SESN2, which sequester the GATOR2 complex in absence of amino acids. In the presence of abundant amino acids, GATOR2 is released from CASTOR1 and SESN2 and activated. Component of the Nup107-160 subcomplex of the nuclear pore complex (NPC). The Nup107-160 subcomplex is required for the assembly of a functional NPC. The Nup107-160 subcomplex is also required for normal kinetochore microtubule attachment, mitotic progression and chromosome segregation. This subunit plays a role in recruitment of the Nup107-160 subcomplex to the kinetochore. Functionally, as a component of the GATOR2 complex, functions as an activator of the amino acid-sensing branch of the mTORC1 signaling pathway. The GATOR2 complex indirectly activates mTORC1 through the inhibition of the GATOR1 subcomplex. GATOR2 probably acts as an E3 ubiquitin-protein ligase toward GATOR1. In the presence of abundant amino acids, the GATOR2 complex mediates ubiquitination of the NPRL2 core component of the GATOR1 complex, leading to GATOR1 inactivation. In the absence of amino acids, GATOR2 is inhibited, activating the GATOR1 complex. The polypeptide is Nucleoporin SEH1 (seh1l) (Danio rerio (Zebrafish)).